We begin with the raw amino-acid sequence, 249 residues long: Methylthioribulose-1-phosphate dehydratase (249 aa).

Substrate is bound at residue C102. Zn(2+) is bound by residues H120 and H122. The active-site Proton donor/acceptor is E148. A Zn(2+)-binding site is contributed by H205.

The protein belongs to the aldolase class II family. MtnB subfamily. Zn(2+) serves as cofactor.

Its subcellular location is the cytoplasm. It carries out the reaction 5-(methylsulfanyl)-D-ribulose 1-phosphate = 5-methylsulfanyl-2,3-dioxopentyl phosphate + H2O. Its pathway is amino-acid biosynthesis; L-methionine biosynthesis via salvage pathway; L-methionine from S-methyl-5-thio-alpha-D-ribose 1-phosphate: step 2/6. Functionally, catalyzes the dehydration of methylthioribulose-1-phosphate (MTRu-1-P) into 2,3-diketo-5-methylthiopentyl-1-phosphate (DK-MTP-1-P). The sequence is that of Methylthioribulose-1-phosphate dehydratase from Botryotinia fuckeliana (strain B05.10) (Noble rot fungus).